The primary structure comprises 530 residues: Ubiquitin carboxyl-terminal hydrolase 17-like protein 21 (530 aa).

The USP domain occupies 80–375; sequence AGLQNMGNTC…QAYVLFYIQK (296 aa). The active-site Nucleophile is the C89. The active-site Proton acceptor is H334. Basic and acidic residues-rich tracts occupy residues 382 to 392 and 398 to 412; these read SESVSRGREPR and DTDR…KRDH. Disordered stretches follow at residues 382–412 and 477–530; these read SESV…KRDH and NHHP…LVCQ. The span at 493–505 shows a compositional bias: polar residues; the sequence is TPTHQESMNTGTL. Positions 510 to 524 are enriched in basic residues; that stretch reads GRARRSKGKNKHSKR.

The protein belongs to the peptidase C19 family. USP17 subfamily.

The protein localises to the nucleus. It is found in the endoplasmic reticulum. It carries out the reaction Thiol-dependent hydrolysis of ester, thioester, amide, peptide and isopeptide bonds formed by the C-terminal Gly of ubiquitin (a 76-residue protein attached to proteins as an intracellular targeting signal).. Deubiquitinating enzyme that removes conjugated ubiquitin from specific proteins to regulate different cellular processes that may include cell proliferation, progression through the cell cycle, apoptosis, cell migration, and the cellular response to viral infection. This is Ubiquitin carboxyl-terminal hydrolase 17-like protein 21 (USP17L21) from Homo sapiens (Human).